The chain runs to 159 residues: Phosphopantetheine adenylyltransferase (159 aa).

It belongs to the eukaryotic CoaD family.

Its subcellular location is the cytoplasm. It catalyses the reaction (R)-4'-phosphopantetheine + ATP + H(+) = 3'-dephospho-CoA + diphosphate. The protein operates within cofactor biosynthesis; coenzyme A biosynthesis. Functionally, reversibly transfers an adenylyl group from ATP to 4'-phosphopantetheine, yielding dephospho-CoA (dPCoA) and pyrophosphate. This is Phosphopantetheine adenylyltransferase from Thermococcus gammatolerans (strain DSM 15229 / JCM 11827 / EJ3).